The chain runs to 699 residues: Probable xyloglucan glycosyltransferase 12 (699 aa).

The next 2 helical transmembrane spans lie at 126 to 146 and 194 to 214; these read CLKV…AAYF and IVLF…CFWI. Asp-280 is a catalytic residue. Substrate is bound by residues Asp-339 and Asp-341. Residue Asp-433 is part of the active site. The next 2 helical transmembrane spans lie at 511 to 531 and 536 to 556; these read LILP…TMFV and LPAW…ILPA. The segment at 616–646 is disordered; it reads EKTTKHQRGVSAPETEAEKKAEKTKRKKKKH. Residues Lys-617 and Lys-620 each participate in a glycyl lysine isopeptide (Lys-Gly) (interchain with G-Cter in ubiquitin) cross-link. Ser-626 is subject to Phosphoserine. The span at 637–646 shows a compositional bias: basic residues; the sequence is EKTKRKKKKH. Helical transmembrane passes span 649–668 and 674–694; these read IYMK…TRSL and IHFY…LDLI.

The protein belongs to the glycosyltransferase 2 family. Plant cellulose synthase-like C subfamily. Homodimer. As to expression, mainly expressed in roots, flowers and seeds, and, at very low levels, in seedlings, leaves and stems.

The protein resides in the golgi apparatus membrane. Functionally, probable beta-1,4-glucan synthase rather involved in the synthesis of the xyloglucan backbone than cellulose. Seems to work simultaneously with xyloglucan 6-xylosyltransferase. Xyloglucan is a noncellulosic polysaccharides of plant cell wall and consists of a glucan backbone substituted by xylose, galactose and fucose. This is Probable xyloglucan glycosyltransferase 12 from Arabidopsis thaliana (Mouse-ear cress).